The chain runs to 258 residues: Pimeloyl-[acyl-carrier protein] methyl ester esterase (258 aa).

The AB hydrolase-1 domain maps to 16–244; that stretch reads LVLVHGWGMN…QSSHAPFMTE (229 aa). Residues Trp22, 82-83, and 146-150 contribute to the substrate site; these read SL and FMALQ. Ser82 serves as the catalytic Nucleophile. Catalysis depends on residues Asp210 and His238. His238 is a substrate binding site.

Belongs to the AB hydrolase superfamily. Carboxylesterase BioH family. Monomer.

It is found in the cytoplasm. It carries out the reaction 6-carboxyhexanoyl-[ACP] methyl ester + H2O = 6-carboxyhexanoyl-[ACP] + methanol + H(+). The protein operates within cofactor biosynthesis; biotin biosynthesis. In terms of biological role, the physiological role of BioH is to remove the methyl group introduced by BioC when the pimeloyl moiety is complete. It allows to synthesize pimeloyl-ACP via the fatty acid synthetic pathway through the hydrolysis of the ester bonds of pimeloyl-ACP esters. The polypeptide is Pimeloyl-[acyl-carrier protein] methyl ester esterase (Vibrio atlanticus (strain LGP32) (Vibrio splendidus (strain Mel32))).